The sequence spans 483 residues: MLIFDHSRPGRTAAAQLPATGGDLGDLPAELRRKDAPALPEVSELDVVRHYTRLSQKNFSIDTQFYPLGSCTMKYNPRACNSLAMLPQFLARHPASPDETGQGFLASMFELQEMLKDVTGMAGVSMAPMAGAHGEFAGVAMIRAYHDAKGDAARREIIVPDAAHGTNPATATMCGYTVKEIPTDATGAVDLAALKAAVGPQTAGLMLTNPSTLGVFEKTIAEIQKIVHDAGGLLYYDGANLNAILGKVRPGDMGFDVIHMNLHKTFSTPHGGGGPGAGPVGVSGRLLPFMPIPLVLNDNGFYRLATEADLPQSIGRMSANMGNAGVLMRAYVYARLLGREGMHRVAEYATLNANYLMAKLREAGFDLAYPTRRASHEFIVTLKKLKDATGVSAMDFAKRLLDYGYHAPTTYFPLLVPECLLIEPTETESRETLDGFVDAMKTIKHEAETNPDLVKGAPYTLPVRRLDDVKAARELDLAYKPAA.

A disordered region spans residues M1–L24. K264 is subject to N6-(pyridoxal phosphate)lysine.

This sequence belongs to the GcvP family. C-terminal subunit subfamily. As to quaternary structure, the glycine cleavage system is composed of four proteins: P, T, L and H. In this organism, the P 'protein' is a heterodimer of two subunits. Requires pyridoxal 5'-phosphate as cofactor.

It carries out the reaction N(6)-[(R)-lipoyl]-L-lysyl-[glycine-cleavage complex H protein] + glycine + H(+) = N(6)-[(R)-S(8)-aminomethyldihydrolipoyl]-L-lysyl-[glycine-cleavage complex H protein] + CO2. The glycine cleavage system catalyzes the degradation of glycine. The P protein binds the alpha-amino group of glycine through its pyridoxal phosphate cofactor; CO(2) is released and the remaining methylamine moiety is then transferred to the lipoamide cofactor of the H protein. This is Probable glycine dehydrogenase (decarboxylating) subunit 2 from Thiobacillus denitrificans (strain ATCC 25259 / T1).